The chain runs to 412 residues: Heat stress transcription factor A-3 (412 aa).

The DNA-binding element occupies 53-147; that stretch reads IPPFLSKTFD…LLKNIHRRRS (95 aa). The segment at 144 to 170 is disordered; the sequence is RRRSPQSNQTCCSSTSQSQGSPTEVGG. Over residues 148-166 the composition is skewed to low complexity; it reads PQSNQTCCSSTSQSQGSPT. The hydrophobic repeat HR-A/B stretch occupies residues 159 to 225; it reads SQSQGSPTEV…QLLSFLAKLF (67 aa). Residues 166-224 are a coiled coil; it reads TEVGGEIEKLRKERRALMEEMVELQQQSRGTARHVDTVNQRLKAAEQRQKQLLSFLAKL. The short motif at 238 to 254 is the Bipartite nuclear localization signal element; it reads KGKEKGGALGLEKARKK. An AHA1 motif is present at residues 277 to 286; that stretch reads DDWERLLMYD. An AHA2 motif is present at residues 381–390; the sequence is DVCWEQFAAG.

It belongs to the HSF family. Class A subfamily. As to quaternary structure, homotrimer. Exhibits temperature-dependent phosphorylation.

Its subcellular location is the nucleus. Its function is as follows. Transcriptional activator that specifically binds DNA sequence 5'-AGAAnnTTCT-3' known as heat shock promoter elements (HSE). Involved in heat stress response. Activated by DREB2A under heat stress. This chain is Heat stress transcription factor A-3 (HSFA3), found in Arabidopsis thaliana (Mouse-ear cress).